Consider the following 239-residue polypeptide: Superoxide dismutase 1 copper chaperone (239 aa).

The HMA domain maps to 7 to 70; sequence FYEATYAVPM…ALRDCGRDAI (64 aa). Residues Cys-18 and Cys-21 each coordinate Cu cation. A disulfide bond links Cys-28 and Cys-65. Asp-163 is a binding site for Zn(2+). The Cu cation site is built by Cys-219 and Cys-221.

Belongs to the CCS1 family. Cu(2+) serves as cofactor.

It localises to the cytoplasm. In terms of biological role, copper chaperone for superoxide dismutase 1 (SOD1). Binds copper ions and delivers them specifically to SOD1. The protein is Superoxide dismutase 1 copper chaperone (CCS1) of Candida glabrata (strain ATCC 2001 / BCRC 20586 / JCM 3761 / NBRC 0622 / NRRL Y-65 / CBS 138) (Yeast).